A 211-amino-acid chain; its full sequence is Large ribosomal subunit protein uL3 (211 aa).

An N5-methylglutamine modification is found at Gln150.

This sequence belongs to the universal ribosomal protein uL3 family. As to quaternary structure, part of the 50S ribosomal subunit. Forms a cluster with proteins L14 and L19. Methylated by PrmB.

In terms of biological role, one of the primary rRNA binding proteins, it binds directly near the 3'-end of the 23S rRNA, where it nucleates assembly of the 50S subunit. The sequence is that of Large ribosomal subunit protein uL3 from Pseudomonas aeruginosa (strain LESB58).